Reading from the N-terminus, the 79-residue chain is Dolichyl-diphosphooligosaccharide--protein glycosyltransferase subunit TMEM258 (79 aa).

M1 is modified (N-acetylmethionine). A run of 2 helical transmembrane segments spans residues 17-37 and 59-79; these read VFPH…AWFF and VASL…GIYI.

This sequence belongs to the OST5 family. In terms of assembly, component of the oligosaccharyltransferase (OST) complex. OST exists in two different complex forms which contain common core subunits RPN1, RPN2, OST48, OST4, DAD1 and TMEM258, either STT3A or STT3B as catalytic subunits, and form-specific accessory subunits. STT3A complex assembly occurs through the formation of 3 subcomplexes. Subcomplex 1 contains RPN1 and TMEM258, subcomplex 2 contains the STT3A-specific subunits STT3A, DC2/OSTC, and KCP2 as well as the core subunit OST4, and subcomplex 3 contains RPN2, DAD1, and OST48. The STT3A complex can form stable complexes with the Sec61 complex or with both the Sec61 and TRAP complexes.

Its subcellular location is the membrane. The protein resides in the endoplasmic reticulum. It localises to the cytoplasm. The protein operates within protein modification; protein glycosylation. Subunit of the oligosaccharyl transferase (OST) complex that catalyzes the initial transfer of a defined glycan (Glc(3)Man(9)GlcNAc(2) in eukaryotes) from the lipid carrier dolichol-pyrophosphate to an asparagine residue within an Asn-X-Ser/Thr consensus motif in nascent polypeptide chains, the first step in protein N-glycosylation. N-glycosylation occurs cotranslationally and the complex associates with the Sec61 complex at the channel-forming translocon complex that mediates protein translocation across the endoplasmic reticulum (ER). All subunits are required for a maximal enzyme activity. Involved in ER homeostasis in the colonic epithelium. The polypeptide is Dolichyl-diphosphooligosaccharide--protein glycosyltransferase subunit TMEM258 (Bos taurus (Bovine)).